We begin with the raw amino-acid sequence, 865 residues long: Rifampicin phosphotransferase (865 aa).

The ATP-binding stretch occupies residues 2-314; the sequence is SGRLVVDLQD…FHIVQSRPIT (313 aa). 8 residues coordinate ATP: Lys23, Arg117, Gly132, Thr136, Gln183, Glu297, Gln309, and Arg311. The rifampicin-binding stretch occupies residues 327 to 752; sequence FRVYLSVGHQ…TSEGVALSGA (426 aa). The segment at 403–430 is disordered; that stretch reads ENGEFEPTPAETDGGAPPAGDGAEPDEA. Over residues 409 to 424 the composition is skewed to low complexity; sequence PTPAETDGGAPPAGDG. A swivel phosphohistidine region spans residues 765-863; sequence GLAVSAGTVE…VHGTEGYIEL (99 aa). The active-site Tele-phosphohistidine intermediate is the His823.

This sequence belongs to the rifampicin phosphotransferase family.

The catalysed reaction is rifampicin + ATP + H2O = 21-phosphorifampicin + AMP + phosphate + 2 H(+). In terms of biological role, catalyzes the phosphorylation of rifampicin, also known as rifampin (RIF), leading to its inactivation. Confers high level resistance to a variety of clinically used rifamycin antibiotics. The protein is Rifampicin phosphotransferase of Streptomyces sp.